Here is a 445-residue protein sequence, read N- to C-terminus: Phosphoglucosamine mutase (445 aa).

Catalysis depends on Ser-99, which acts as the Phosphoserine intermediate. Residues Ser-99, Asp-242, Asp-244, and Asp-246 each contribute to the Mg(2+) site. Position 99 is a phosphoserine (Ser-99).

It belongs to the phosphohexose mutase family. It depends on Mg(2+) as a cofactor. In terms of processing, activated by phosphorylation.

The catalysed reaction is alpha-D-glucosamine 1-phosphate = D-glucosamine 6-phosphate. Catalyzes the conversion of glucosamine-6-phosphate to glucosamine-1-phosphate. The polypeptide is Phosphoglucosamine mutase (Campylobacter jejuni subsp. jejuni serotype O:2 (strain ATCC 700819 / NCTC 11168)).